We begin with the raw amino-acid sequence, 128 residues long: Glycine cleavage system H protein (128 aa).

Positions 25–107 (IITVGITHHA…YGAGWFFKLK (83 aa)) constitute a Lipoyl-binding domain. Lys66 bears the N6-lipoyllysine mark.

It belongs to the GcvH family. The glycine cleavage system is composed of four proteins: P, T, L and H. The cofactor is (R)-lipoate.

Its function is as follows. The glycine cleavage system catalyzes the degradation of glycine. The H protein shuttles the methylamine group of glycine from the P protein to the T protein. The polypeptide is Glycine cleavage system H protein (Neisseria meningitidis serogroup A / serotype 4A (strain DSM 15465 / Z2491)).